Reading from the N-terminus, the 117-residue chain is Ig heavy chain V region MOPC 173 (117 aa).

One can recognise an Ig-like domain in the interval 1–116; it reads EVKLLESGGP…WGQGTSVTVS (116 aa). A disulfide bridge links C22 with C96.

This chain is Ig heavy chain V region MOPC 173, found in Mus musculus (Mouse).